The chain runs to 334 residues: Tryptophan--tRNA ligase (334 aa).

ATP-binding positions include 11–13 and 19–20; these read QPT and GN. A 'HIGH' region motif is present at residues 12-20; it reads PTGKLTIGN. D135 contributes to the L-tryptophan binding site. ATP contacts are provided by residues 147 to 149, I186, and 195 to 199; these read GED and KMSKS. The 'KMSKS' region signature appears at 195-199; the sequence is KMSKS.

This sequence belongs to the class-I aminoacyl-tRNA synthetase family. Homodimer.

The protein resides in the cytoplasm. It carries out the reaction tRNA(Trp) + L-tryptophan + ATP = L-tryptophyl-tRNA(Trp) + AMP + diphosphate + H(+). Functionally, catalyzes the attachment of tryptophan to tRNA(Trp). In Blochmanniella floridana, this protein is Tryptophan--tRNA ligase.